The primary structure comprises 608 residues: Pentatricopeptide repeat-containing protein At5g40410, mitochondrial (608 aa).

Residues 1-28 (MIKANVYSCSKFRFLYRRRFLSQSSFVH) constitute a mitochondrion transit peptide. PPR repeat units follow at residues 30–64 (LDAN…VSYR), 65–95 (HGFI…MPER), 96–130 (DLVS…EVGF), 133–167 (NEVT…GVLE), 168–198 (EVKV…LSIK), 199–233 (NLVS…GHEP), 234–268 (DQAT…GFSG), 269–299 (NKCI…ITSP), 300–334 (DSMA…GISP), 335–365 (DHVT…MSKR), and 371–401 (RLDH…MPME). The tract at residues 406 to 481 (VWGALLGACR…ASGCSYIEHG (76 aa)) is type E motif. Positions 482–512 (NKIHKFVVGDWSHPESEKIQKKLKEIRKKMK) are type E(+) motif. The interval 514-608 (EMGYKSKTEF…DGSCSCSDYW (95 aa)) is type DYW motif.

This sequence belongs to the PPR family. PCMP-H subfamily.

It is found in the mitochondrion. This Arabidopsis thaliana (Mouse-ear cress) protein is Pentatricopeptide repeat-containing protein At5g40410, mitochondrial (PCMP-H15).